The chain runs to 208 residues: Probable GTP-binding protein EngB (208 aa).

The 174-residue stretch at 22 to 195 (GLPEIALAGR…WGALEDIFVE (174 aa)) folds into the EngB-type G domain. GTP-binding positions include 30–37 (GRSNVGKS), 57–61 (GKTRT), 75–78 (DLPG), 142–145 (TKSD), and 174–176 (ISS). 2 residues coordinate Mg(2+): Ser37 and Thr59.

Belongs to the TRAFAC class TrmE-Era-EngA-EngB-Septin-like GTPase superfamily. EngB GTPase family. Requires Mg(2+) as cofactor.

In terms of biological role, necessary for normal cell division and for the maintenance of normal septation. This Alkaliphilus metalliredigens (strain QYMF) protein is Probable GTP-binding protein EngB.